A 105-amino-acid chain; its full sequence is Small ribosomal subunit protein uS10 (105 aa).

The protein belongs to the universal ribosomal protein uS10 family. As to quaternary structure, part of the 30S ribosomal subunit.

In terms of biological role, involved in the binding of tRNA to the ribosomes. In Anaplasma marginale (strain Florida), this protein is Small ribosomal subunit protein uS10.